The chain runs to 528 residues: Probable cyclic di-GMP phosphodiesterase PdeC (528 aa).

The next 2 helical transmembrane spans lie at 14–34 (GIIFLVLFPIILSLWIAFLWA) and 242–262 (HLIFALPAGILGSLVLLLLWL). In terms of domain architecture, EAL spans 268–520 (YLSPKRKLQR…VFMQWMEQLP (253 aa)).

Its subcellular location is the cell inner membrane. The enzyme catalyses 3',3'-c-di-GMP + H2O = 5'-phosphoguanylyl(3'-&gt;5')guanosine + H(+). Its function is as follows. Phosphodiesterase (PDE) that catalyzes the hydrolysis of cyclic-di-GMP (c-di-GMP) to 5'-pGpG. Cyclic-di-GMP is a second messenger which controls cell surface-associated traits in bacteria. Overexpression reduces biofilm formation. In Escherichia coli (strain K12), this protein is Probable cyclic di-GMP phosphodiesterase PdeC.